We begin with the raw amino-acid sequence, 1288 residues long: SH3 domain and tetratricopeptide repeat-containing protein 2 (1288 aa).

2 consecutive SH3 domains span residues 176–240 and 268–331; these read EGHF…PLPL and IGRG…PDSY. Over residues 386-395 the composition is skewed to polar residues; that stretch reads NPPNDLSASQ. 2 disordered regions span residues 386-405 and 410-444; these read NPPNDLSASQPEGFKEVRPG and EHQAVGSRQSSSSEDSSLEEELLSATSDSYRLPEP. TPR repeat units follow at residues 528 to 561, 757 to 790, 836 to 869, 1001 to 1037, 1084 to 1118, 1119 to 1152, 1166 to 1199, and 1210 to 1244; these read ARLCFLLGRLSIRKVKLSQARVYFEEAIHILNGA, RALCLILSKVYLEHRSPDGAIHYLSQALVLGQLL, GVIYNLLGLALQGEGRVNRAAKSYLRALNRAQEV, GRLLESLGQLYRNLNTARSLRRSLTCIKESLRIFIDL, LKLYEEAGDVFFNGTRHRHHAVEYYRAGAVPLARR, LKAVRTELRIFNKLTELQISLEGYEKALEFATLA, LVAFHRLATVYYSLHMYEMAEDCYLKTLSLCPPW, and AKVYYRLGRLTFCQLKDAHDATEYFLLALAAAVLL.

In terms of tissue distribution, strongly expressed in brain and spinal cord. Expressed at equal level in spinal cord and sciatic nerve. Weakly expressed in striated muscle.

This chain is SH3 domain and tetratricopeptide repeat-containing protein 2 (SH3TC2), found in Homo sapiens (Human).